The chain runs to 580 residues: Threonine--tRNA ligase (580 aa).

The tract at residues 179-476 (DHRKIGKDLN…LLEQTKGILP (298 aa)) is catalytic. The Zn(2+) site is built by C272, H323, and H453.

It belongs to the class-II aminoacyl-tRNA synthetase family. Homodimer. The cofactor is Zn(2+).

The protein localises to the cytoplasm. It carries out the reaction tRNA(Thr) + L-threonine + ATP = L-threonyl-tRNA(Thr) + AMP + diphosphate + H(+). Catalyzes the attachment of threonine to tRNA(Thr) in a two-step reaction: L-threonine is first activated by ATP to form Thr-AMP and then transferred to the acceptor end of tRNA(Thr). Also edits incorrectly charged L-seryl-tRNA(Thr). The chain is Threonine--tRNA ligase from Ureaplasma parvum serovar 3 (strain ATCC 27815 / 27 / NCTC 11736).